Reading from the N-terminus, the 343-residue chain is MDNQAERESEAGVGLQRDEDDAPLCEDVELQDGDLSPEEKIFLREFPRLKEDLKGNIDKLRALADDIDKTHKKFTKANMVATSTAVISGVMSLLGLALAPATGGGSLLLSTAGQGLATAAGVTSIVSGTLERSKNKEAQARAEDILPTYDQEDREDEEEKADYVTAAGKIIYNLRNTLKYAKKNVRAFWKLRANPRLANATKRLLTTGQVSSRSRVQVQKAFAGTTLAMTKNARVLGGVMSAFSLGYDLATLSKEWKHLKEGARTKFAEELRAKALELERKLTELTQLYKSLQQKVRSRARGVGKDLTGTCETEAYWKELREHVWMWLWLCVCLCVCVYVQFT.

The segment covering 1-10 has biased composition (basic and acidic residues); it reads MDNQAERESE. The tract at residues 1–24 is disordered; it reads MDNQAERESEAGVGLQRDEDDAPL.

Belongs to the apolipoprotein L family. Widely expressed; highly expressed in the uterus, fetal brain and spinal cord, also detected in heart, liver, lung, colon, spleen, thymus, prostate, placenta, adrenal gland, salivary and mammary gland.

The protein localises to the cytoplasm. In terms of biological role, may affect the movement of lipids in the cytoplasm or allow the binding of lipids to organelles. The chain is Apolipoprotein L6 (APOL6) from Homo sapiens (Human).